The sequence spans 77 residues: uncharacterized protein (77 aa).

Its function is as follows. Putative sugar-binding regulatory protein for the alpha-amylase gene. This is an uncharacterized protein from Streptomyces violaceus (Streptomyces venezuelae).